We begin with the raw amino-acid sequence, 371 residues long: UDP-N-acetylglucosamine--N-acetylmuramyl-(pentapeptide) pyrophosphoryl-undecaprenol N-acetylglucosamine transferase (371 aa).

Residues 10–12 (TGG), Asn-124, Arg-165, Ser-197, Ile-251, and Gln-296 contribute to the UDP-N-acetyl-alpha-D-glucosamine site.

It belongs to the glycosyltransferase 28 family. MurG subfamily.

The protein resides in the cell membrane. The enzyme catalyses di-trans,octa-cis-undecaprenyl diphospho-N-acetyl-alpha-D-muramoyl-L-alanyl-D-glutamyl-meso-2,6-diaminopimeloyl-D-alanyl-D-alanine + UDP-N-acetyl-alpha-D-glucosamine = di-trans,octa-cis-undecaprenyl diphospho-[N-acetyl-alpha-D-glucosaminyl-(1-&gt;4)]-N-acetyl-alpha-D-muramoyl-L-alanyl-D-glutamyl-meso-2,6-diaminopimeloyl-D-alanyl-D-alanine + UDP + H(+). It functions in the pathway cell wall biogenesis; peptidoglycan biosynthesis. In terms of biological role, cell wall formation. Catalyzes the transfer of a GlcNAc subunit on undecaprenyl-pyrophosphoryl-MurNAc-pentapeptide (lipid intermediate I) to form undecaprenyl-pyrophosphoryl-MurNAc-(pentapeptide)GlcNAc (lipid intermediate II). The polypeptide is UDP-N-acetylglucosamine--N-acetylmuramyl-(pentapeptide) pyrophosphoryl-undecaprenol N-acetylglucosamine transferase (Carboxydothermus hydrogenoformans (strain ATCC BAA-161 / DSM 6008 / Z-2901)).